The following is a 481-amino-acid chain: Proline--tRNA ligase (481 aa).

The protein belongs to the class-II aminoacyl-tRNA synthetase family. ProS type 3 subfamily. As to quaternary structure, homodimer.

It is found in the cytoplasm. The catalysed reaction is tRNA(Pro) + L-proline + ATP = L-prolyl-tRNA(Pro) + AMP + diphosphate. Its function is as follows. Catalyzes the attachment of proline to tRNA(Pro) in a two-step reaction: proline is first activated by ATP to form Pro-AMP and then transferred to the acceptor end of tRNA(Pro). This is Proline--tRNA ligase from Chlorobium limicola (strain DSM 245 / NBRC 103803 / 6330).